The chain runs to 477 residues: Glutamate--tRNA ligase (477 aa).

Residues 8 to 18 carry the 'HIGH' region motif; that stretch reads PSPTGTLHIGT. Positions 247-251 match the 'KMSKS' region motif; sequence KLSKR. Lys-250 serves as a coordination point for ATP.

This sequence belongs to the class-I aminoacyl-tRNA synthetase family. Glutamate--tRNA ligase type 1 subfamily. Monomer.

The protein resides in the cytoplasm. The enzyme catalyses tRNA(Glu) + L-glutamate + ATP = L-glutamyl-tRNA(Glu) + AMP + diphosphate. In terms of biological role, catalyzes the attachment of glutamate to tRNA(Glu) in a two-step reaction: glutamate is first activated by ATP to form Glu-AMP and then transferred to the acceptor end of tRNA(Glu). This Synechococcus sp. (strain CC9902) protein is Glutamate--tRNA ligase.